A 379-amino-acid chain; its full sequence is Succinyl-diaminopimelate desuccinylase (379 aa).

Zn(2+) is bound at residue histidine 70. Aspartate 72 is a catalytic residue. Residue aspartate 103 coordinates Zn(2+). Residue glutamate 137 is the Proton acceptor of the active site. Zn(2+) contacts are provided by glutamate 138, glutamate 166, and histidine 352.

The protein belongs to the peptidase M20A family. DapE subfamily. Homodimer. Zn(2+) is required as a cofactor. Requires Co(2+) as cofactor.

The catalysed reaction is N-succinyl-(2S,6S)-2,6-diaminopimelate + H2O = (2S,6S)-2,6-diaminopimelate + succinate. Its pathway is amino-acid biosynthesis; L-lysine biosynthesis via DAP pathway; LL-2,6-diaminopimelate from (S)-tetrahydrodipicolinate (succinylase route): step 3/3. In terms of biological role, catalyzes the hydrolysis of N-succinyl-L,L-diaminopimelic acid (SDAP), forming succinate and LL-2,6-diaminopimelate (DAP), an intermediate involved in the bacterial biosynthesis of lysine and meso-diaminopimelic acid, an essential component of bacterial cell walls. The chain is Succinyl-diaminopimelate desuccinylase from Burkholderia pseudomallei (strain 1106a).